The primary structure comprises 915 residues: Kinesin-like protein KIN-10A (915 aa).

The span at 1-16 shows a compositional bias: pro residues; the sequence is MAPPTPSPRPGPPPTP. Disordered stretches follow at residues 1 to 28 and 34 to 53; these read MAPPTPSPRPGPPPTPQAAMTTPLKTPA and HFPAMTPRNGGGGGAAAGGT. Residues 56 to 391 enclose the Kinesin motor domain; it reads PVEVIGRIRN…LEYGAKAKCI (336 aa). Position 137–144 (137–144) interacts with ATP; that stretch reads GPTGSGKS. A coiled-coil region spans residues 426 to 517; that stretch reads NLQKENKLRE…QRLKEVEREK (92 aa). The tract at residues 676–718 is disordered; that stretch reads PAKKAFGDENNEPAKQTFGDENKQQPAKRVFGDENKDPSAWGA.

The protein belongs to the TRAFAC class myosin-kinesin ATPase superfamily. Kinesin family. KIN-10 subfamily.

This chain is Kinesin-like protein KIN-10A, found in Oryza sativa subsp. japonica (Rice).